Consider the following 1652-residue polypeptide: Venom factor (1652 aa).

A signal peptide spans 1–22 (MEGMALYLVAALLIGFPASSFG). The Mg(2+) site is built by P519, D542, V543, and D545. Intrachain disulfides connect C547–C808, C616–C651, C684–C711, C685–C718, C698–C719, C864–C1502, C1347–C1478, C1378–C1447, C1495–C1500, C1507–C1579, C1526–C1650, and C1626–C1635. Positions 657–740 (RRRRRSVVLL…REDELFLARS (84 aa)) are excised as a propeptide. The tract at residues 661 to 739 (RSVVLLDSKA…KREDELFLAR (79 aa)) is C3a-like domain. One can recognise an Anaphylatoxin-like domain in the interval 684 to 719 (CCEDGMHENPMGYSCEKREKYIQEGDACKAAFLECC). Residues 743–754 (EDEFFGEDNIIS) form a factor B binding site region. Positions 992–1270 (HLIITPSGCG…VVGFQGLAEY (279 aa)) are excised as a propeptide. The C3d-like domain stretch occupies residues 992–1270 (HLIITPSGCG…VVGFQGLAEY (279 aa)). The segment at residues 1000-1003 (CGEQ) is a cross-link (isoglutamyl cysteine thioester (Cys-Gln)). Positions 1197-1260 (VLMAASTERN…GGTYGQTQAT (64 aa)) are factor H binding site. An NTR domain is found at 1507 to 1650 (CSLLNQQKKI…LSNTLTIFGC (144 aa)).

The protein belongs to the venom complement C3 homolog family. Heterotrimer of alpha, beta and gamma chains; disulfide-linked. Is active with factor B in the presence of factor D. In terms of processing, first processed by the removal of 4 Arg residues by furin-type protease, forming two chains, alpha and gamma/beta precursor, linked by a disulfide bond. Probably, a cobrin-like protease cleaves the C3a-like domain and then the C3d-like domain, generating the mature venom factor (VF). As to expression, expressed by the venom gland.

The protein resides in the secreted. Functionally, complement-activating protein in venom. It is a structural and functional analog of complement component C3b, the activated form of C3. It binds factor B (CFB), which is subsequently cleaved by factor D (CFD) to form the bimolecular complex VF/Bb. VF/Bb is a C3/C5 convertase that cleaves both complement components C3 and C5. Structurally, it resembles the C3b degradation product C3c, which is not able to form a C3/C5 convertase. Unlike C3b/Bb, VF/Bb is a stable complex and completely resistant to the actions of complement regulatory factors H (CFH) and I (CFI). Therefore, VF continuously activates complement resulting in the depletion of complement activity. This is Venom factor from Crotalus adamanteus (Eastern diamondback rattlesnake).